Consider the following 236-residue polypeptide: Kinetochore protein Spc25 (236 aa).

Residues 44–106 (KNIISAKEAI…DMEAQLLRHT (63 aa)) adopt a coiled-coil conformation. A disordered region spans residues 194-217 (EVAGASPVTPSGSERPKATSKHSN).

Belongs to the SPC25 family. As to quaternary structure, component of the Ndc80 complex, which is composed of Ndc80, Nuf2 and Spc25.

It localises to the nucleus. Its subcellular location is the chromosome. The protein localises to the centromere. It is found in the kinetochore. Acts as a component of the essential kinetochore-associated Ndc80 complex, which is required for chromosome segregation and spindle checkpoint activity during meiosis and mitosis. Required for kinetochore integrity and the organization of stable microtubule binding sites in the outer plate of the kinetochore. Participates in SAC signaling that responds specifically to disruptions in spindle microtubule dynamics. The NDC80 complex synergistically enhances the affinity of the SKA1 complex for microtubules and may allow the NDC80 complex to track depolymerizing microtubules. This Drosophila persimilis (Fruit fly) protein is Kinetochore protein Spc25.